The following is a 303-amino-acid chain: MIKQRTLKNEIRATGVGLHTGQKVYLTLLPAPVDAGIVFRRVDLNPVVEIPAKAANVGDTTLSTTLIQDGVRVSTVEHLLSAMAGLGIDNAIIEVSADEVPIMDGSAGPFVFLIQSAGIVEQNAAKKFIRIKKPITVQDGDKSASFLPFEGFKVSFTIDFDHPVFRGRKLDATVDFSSTSFVKEVSRARTFGFMHEIEYLRSKGLAKGGSVDNAIVVDKFRILNEDGLRYEDEFVKHKILDAIGDLYLLGTSLIGEYKAYKSGHGLNNKSLLELIKQEDAWEMVTFEDDEVAPISYIKPLLAV.

Zn(2+) is bound by residues H78, H237, and D241. H264 functions as the Proton donor in the catalytic mechanism.

This sequence belongs to the LpxC family. The cofactor is Zn(2+).

It carries out the reaction a UDP-3-O-[(3R)-3-hydroxyacyl]-N-acetyl-alpha-D-glucosamine + H2O = a UDP-3-O-[(3R)-3-hydroxyacyl]-alpha-D-glucosamine + acetate. It participates in glycolipid biosynthesis; lipid IV(A) biosynthesis; lipid IV(A) from (3R)-3-hydroxytetradecanoyl-[acyl-carrier-protein] and UDP-N-acetyl-alpha-D-glucosamine: step 2/6. Its function is as follows. Catalyzes the hydrolysis of UDP-3-O-myristoyl-N-acetylglucosamine to form UDP-3-O-myristoylglucosamine and acetate, the committed step in lipid A biosynthesis. The chain is UDP-3-O-acyl-N-acetylglucosamine deacetylase from Saccharophagus degradans (strain 2-40 / ATCC 43961 / DSM 17024).